We begin with the raw amino-acid sequence, 406 residues long: Inner kinetochore subunit OKP1 (406 aa).

Disordered stretches follow at residues 1 to 37 (MAAD…SDSS) and 59 to 122 (TQSK…TSGE). Positions 8 to 21 (FLQNIENDSINNGQ) are enriched in polar residues. The segment covering 26-37 (SPNRSSSESDSS) has biased composition (low complexity). Positions 69-78 (NSDDAEEGEI) are enriched in acidic residues. At Ser-70 the chain carries Phosphoserine. 2 stretches are compositionally biased toward basic and acidic residues: residues 79–89 (EERTNKEEGQY) and 97–106 (LRFEVGKEST). Residues 107–122 (GKLQSHLSDGSATSGE) are compositionally biased toward polar residues. The stretch at 239 to 285 (SKRQFIQNRYSQELQNNERLEAILSREQNLLEETRKLCMNLKTNNKK) forms a coiled coil. Residues 317–340 (MHPDGPVTFRNDSHELNLMLNDPI) are CTF19-MCM21 binding motif. Residues 353 to 400 (VLSLLPSLKEYTKKSKELKETMGQMISDSHEEEIKEVFVPHHESHQDK) form an interaction with NKP1-NKP2 region. A disordered region spans residues 379 to 406 (SDSHEEEIKEVFVPHHESHQDKTEEDIH). Residues 380–406 (DSHEEEIKEVFVPHHESHQDKTEEDIH) are compositionally biased toward basic and acidic residues.

It belongs to the CENP-Q/OKP1 family. As to quaternary structure, component of the heterotetrameric kinetochore subcomplex COMA, which consists of AME1, CTF19, MCM21 and OKP1. The COMA subcomplex is part of a larger constitutive centromere-associated network (CCAN) (also known as central kinetochore CTF19 complex in yeast), which is composed of at least AME1, CHL4, CNN1, CTF3, CTF19, IML3, MCM16, MCM21, MCM22, MHF1, MHF2, MIF2, NKP1, NKP2, OKP1 and WIP1. COMA binds the centromeric nucleosome-binding protein MIF2, and to the outer kinetochore MIND subcomplex. OKP1 interacts directly with AME1, with an NKP1-NKP2 dimer, and with CTF19-MCM21.

The protein localises to the nucleus. Its subcellular location is the chromosome. It is found in the centromere. The protein resides in the kinetochore. In terms of biological role, component of the kinetochore, a multiprotein complex that assembles on centromeric DNA and attaches chromosomes to spindle microtubules, mediating chromosome segregation and sister chromatid segregation during meiosis and mitosis. Component of the inner kinetochore COMA complex, which connects centromere-associated proteins and the outer kinetochore. COMA interacts with other inner kinetochore proteins to form the inner kinetochore constitutive centromere-associated network (CCAN), which serves as a structural platform for outer kinetochore assembly. The polypeptide is Inner kinetochore subunit OKP1 (Saccharomyces cerevisiae (strain ATCC 204508 / S288c) (Baker's yeast)).